The following is a 118-amino-acid chain: MICOS complex subunit MIC13 (118 aa).

The Mitochondrial matrix segment spans residues 1-7 (MVARVWS). The helical transmembrane segment at 8 to 26 (LMRFLIKGSVAGGAVYLVY) threads the bilayer. Residues 27–118 (DQELLGPSDK…GWEYVKARTK (92 aa)) are Mitochondrial intermembrane-facing.

The protein belongs to the MICOS complex subunit Mic13 family. Component of the mitochondrial contact site and cristae organizing system (MICOS) complex, composed of at least MICOS10/MIC10, CHCHD3/MIC19, CHCHD6/MIC25, APOO/MIC26, MICOS13/MIC13, APOOL/MIC27 and IMMT/MIC60. The MICOS complex associates with mitochondrial outer membrane proteins SAMM50, MTX1 and MTX2 (together described as components of the mitochondrial outer membrane sorting assembly machinery (SAM) complex) and DNAJC11, mitochondrial inner membrane protein TMEM11 and with HSPA9. The MICOS and SAM complexes together with DNAJC11 are part of a large protein complex spanning both membranes termed the mitochondrial intermembrane space bridging (MIB) complex.

Its subcellular location is the mitochondrion inner membrane. Its function is as follows. Component of the MICOS complex, a large protein complex of the mitochondrial inner membrane that plays crucial roles in the maintenance of crista junctions, inner membrane architecture, and formation of contact sites to the outer membrane. Constituent of mature MICOS complex, it is required for the formation of cristae junction (CJ) and maintenance of cristae morphology. Required for the incorporation of MICOS10/MIC10 into the MICOS complex. This is MICOS complex subunit MIC13 from Homo sapiens (Human).